Here is a 365-residue protein sequence, read N- to C-terminus: Putative 2-dehydropantoate 2-reductase (365 aa).

It belongs to the ketopantoate reductase family.

It carries out the reaction (R)-pantoate + NADP(+) = 2-dehydropantoate + NADPH + H(+). It functions in the pathway cofactor biosynthesis; (R)-pantothenate biosynthesis; (R)-pantoate from 3-methyl-2-oxobutanoate: step 2/2. Functionally, catalyzes the NADPH-dependent reduction of ketopantoate into pantoic acid. This chain is Putative 2-dehydropantoate 2-reductase (KPR), found in Arabidopsis thaliana (Mouse-ear cress).